The chain runs to 511 residues: Histidine ammonia-lyase 2 (511 aa).

The segment at residues 144–146 is a cross-link (5-imidazolinone (Ser-Gly)); that stretch reads SSG. A 2,3-didehydroalanine (Ser) modification is found at S145.

This sequence belongs to the PAL/histidase family. Post-translationally, contains an active site 4-methylidene-imidazol-5-one (MIO), which is formed autocatalytically by cyclization and dehydration of residues Ser-Ser-Gly.

The protein resides in the cytoplasm. The catalysed reaction is L-histidine = trans-urocanate + NH4(+). The protein operates within amino-acid degradation; L-histidine degradation into L-glutamate; N-formimidoyl-L-glutamate from L-histidine: step 1/3. The chain is Histidine ammonia-lyase 2 (hutH2) from Fusobacterium nucleatum subsp. nucleatum (strain ATCC 25586 / DSM 15643 / BCRC 10681 / CIP 101130 / JCM 8532 / KCTC 2640 / LMG 13131 / VPI 4355).